We begin with the raw amino-acid sequence, 334 residues long: Anthranilate phosphoribosyltransferase (334 aa).

Residues Gly79, 82-83 (GD), Ser87, 89-92 (NIST), 107-115 (KHGNRSISS), and Ser119 each bind 5-phospho-alpha-D-ribose 1-diphosphate. Gly79 contacts anthranilate. Ser91 is a Mg(2+) binding site. Residue Asn110 participates in anthranilate binding. Arg165 lines the anthranilate pocket. Positions 224 and 225 each coordinate Mg(2+).

This sequence belongs to the anthranilate phosphoribosyltransferase family. As to quaternary structure, homodimer. It depends on Mg(2+) as a cofactor.

It catalyses the reaction N-(5-phospho-beta-D-ribosyl)anthranilate + diphosphate = 5-phospho-alpha-D-ribose 1-diphosphate + anthranilate. It participates in amino-acid biosynthesis; L-tryptophan biosynthesis; L-tryptophan from chorismate: step 2/5. Functionally, catalyzes the transfer of the phosphoribosyl group of 5-phosphorylribose-1-pyrophosphate (PRPP) to anthranilate to yield N-(5'-phosphoribosyl)-anthranilate (PRA). The chain is Anthranilate phosphoribosyltransferase from Streptococcus gordonii (strain Challis / ATCC 35105 / BCRC 15272 / CH1 / DL1 / V288).